Here is a 2703-residue protein sequence, read N- to C-terminus: Serine/arginine repetitive matrix protein 2 (2703 aa).

N-acetylmethionine is present on Met-1. Positions 60 to 92 (HERKRRVELRCLELEEMMEEQGYEEQQIQEKVA) form a coiled coil. At Lys-101 the chain carries N6-acetyllysine. Residues Lys-108 and Lys-130 each participate in a glycyl lysine isopeptide (Lys-Gly) (interchain with G-Cter in SUMO2) cross-link. The interval 141-1007 (ISDSYVDGSS…SGSFHLCPGV (867 aa)) is disordered. Tyr-145 is modified (phosphotyrosine). Lys-169 carries the N6-acetyllysine modification. 2 stretches are compositionally biased toward basic residues: residues 186-197 (KQKKKKKKKDRG) and 207-249 (RERK…KRSR). The interval 197 to 259 (GRRSESSSPR…STTPAPKSRR (63 aa)) is sufficient for RNA-binding. A phosphoserine mark is found at Ser-220 and Ser-222. Over residues 263–284 (STSADSASSSDTSRSRSRSAAA) the composition is skewed to low complexity. A phosphoserine mark is found at Ser-295, Ser-300, Ser-310, Ser-322, and Ser-323. Over residues 319-334 (QQPSSPAPSTKQSSSP) the composition is skewed to low complexity. Residues 335–345 (YEDKDKKEKSA) show a composition bias toward basic and acidic residues. Phosphoserine occurs at positions 349, 351, 355, and 356. 2 positions are modified to phosphothreonine: Thr-357 and Thr-365. Ser-375, Ser-385, Ser-393, Ser-396, Ser-402, Ser-406, Ser-422, Ser-433, Ser-434, Ser-435, Ser-438, Ser-452, Ser-482, Ser-484, Ser-503, Ser-505, Ser-507, Ser-531, Ser-533, and Ser-540 each carry phosphoserine. Residues 383-396 (PSSQEPVNPSSEAS) are compositionally biased toward polar residues. Residues 425–437 (PTKGSRHASSSPE) show a composition bias toward polar residues. Over residues 459–533 (NRSHGRAKRD…SPQRRGRSRS (75 aa)) the composition is skewed to basic residues. Over residues 534–543 (PQRPGWSRSR) the composition is skewed to low complexity. 3 stretches are compositionally biased toward basic residues: residues 544–561 (NTQR…RSHS), 568–721 (GRSR…RRGR), and 730–740 (NKSRTSQRRSR). 3 positions are modified to phosphoserine: Ser-700, Ser-702, and Ser-704. Phosphoserine is present on residues Ser-773, Ser-775, and Ser-778. A compositionally biased stretch (low complexity) spans 785–817 (SQTPTRRSRSGSSPPKQKSKTPPRQSRSNSPQP). Phosphoserine occurs at positions 821 and 829. Polar residues-rich tracts occupy residues 829-851 (SVTN…SESS) and 859-874 (RTPS…PRVK). Phosphothreonine occurs at positions 831 and 841. Phosphoserine is present on residues Ser-846, Ser-850, and Ser-851. Composition is skewed to low complexity over residues 875–891 (SSTP…SPQP) and 898–919 (SPRG…TSRT). 11 positions are modified to phosphoserine: Ser-882, Ser-909, Ser-924, Ser-926, Ser-928, Ser-940, Ser-942, Ser-944, Ser-945, Ser-946, and Ser-949. Phosphothreonine is present on Thr-955. Over residues 960-1000 (SGSTSPYLKSMLQTPPDQNLSGSKSPCPQKSRDSPTGSSGS) the composition is skewed to polar residues. Residues Ser-962 and Ser-964 each carry the phosphoserine modification. Position 966 is a phosphotyrosine (Tyr-966). A Phosphothreonine modification is found at Thr-973. Phosphoserine occurs at positions 980, 984, and 993. Thr-995 carries the phosphothreonine modification. A phosphoserine mark is found at Ser-997, Ser-1000, Ser-1011, Ser-1037, and Ser-1038. A compositionally biased stretch (polar residues) spans 1024–1057 (VQQKGHTQTWPDTSSPEVMQTQVESPLLQSKSQT). The tract at residues 1024 to 1112 (VQQKGHTQTW…TKPDSSIYPL (89 aa)) is disordered. At Thr-1044 the chain carries Phosphothreonine. Phosphoserine is present on residues Ser-1048, Ser-1064, Ser-1066, Ser-1067, and Ser-1068. Residues 1058-1068 (SPKGSLSRSSS) are compositionally biased toward low complexity. Thr-1071 is modified (phosphothreonine). Residues Ser-1077, Ser-1087, Ser-1094, Ser-1097, Ser-1117, Ser-1151, Ser-1159, Ser-1175, Ser-1188, Ser-1216, Ser-1225, Ser-1229, Ser-1230, Ser-1269, Ser-1276, Ser-1278, Ser-1284, Ser-1287, Ser-1294, Ser-1305, Ser-1325, Ser-1338, Ser-1339, Ser-1340, Ser-1343, Ser-1359, and Ser-1360 each carry the phosphoserine modification. A compositionally biased stretch (basic and acidic residues) spans 1079 to 1092 (VKQDKSEISTDPKL). Residues 1136 to 2092 (IQEDVASSCI…RSPGMLEPLG (957 aa)) form a disordered region. Residues 1146–1158 (PRDKFSPTQDRPE) are compositionally biased toward basic and acidic residues. Residues 1270-1284 (PEHKELSHSPPRENS) show a composition bias toward basic and acidic residues. Over residues 1285 to 1304 (FESSLEFKNSGPVSEVNTGF) the composition is skewed to polar residues. Position 1370 is a phosphothreonine (Thr-1370). Positions 1371-1387 (PSRERSSSASPELKDGL) are enriched in basic and acidic residues. 3 positions are modified to phosphoserine: Ser-1372, Ser-1378, and Ser-1380. Position 1390 is a phosphothreonine (Thr-1390). A compositionally biased stretch (low complexity) spans 1397 to 1408 (SGSSPGLRDGSG). Phosphoserine is present on residues Ser-1400 and Ser-1407. The residue at position 1409 (Thr-1409) is a Phosphothreonine. Residues 1409–1431 (TPSRHSLSGSSPGMKDTPQTPSR) show a composition bias toward polar residues. 4 positions are modified to phosphoserine: Ser-1414, Ser-1416, Ser-1418, and Ser-1419. The residue at position 1428 (Thr-1428) is a Phosphothreonine. Residues Ser-1438 and Ser-1439 each carry the phosphoserine modification. The residue at position 1448 (Thr-1448) is a Phosphothreonine. Phosphoserine occurs at positions 1453, 1455, 1457, 1458, and 1465. The span at 1454 to 1468 (HSPSSPERNNKSVTP) shows a compositional bias: polar residues. Phosphothreonine is present on Thr-1467. Phosphoserine occurs at positions 1473, 1475, 1477, and 1478. A compositionally biased stretch (polar residues) spans 1475-1489 (SESSVEQKNLARTSP). Thr-1487 carries the post-translational modification Phosphothreonine. Residues 1490-1499 (GQRSRSGSSQ) show a composition bias toward low complexity. Phosphoserine occurs at positions 1493, 1495, 1497, 1498, and 1508. Over residues 1511-1523 (ERSESDSSPDSKP) the composition is skewed to basic and acidic residues. Basic residues predominate over residues 1524–1533 (KTRTPLRQRS). 15 positions are modified to phosphoserine: Ser-1533, Ser-1535, Ser-1537, Ser-1538, Ser-1554, Ser-1556, Ser-1557, Ser-1572, Ser-1576, Ser-1577, Ser-1604, Ser-1614, Ser-1647, Ser-1649, and Ser-1650. The span at 1604-1613 (SPEGSSSSES) shows a compositional bias: low complexity. Over residues 1637-1647 (KSHTPPRRRSS) the composition is skewed to basic residues. Thr-1654 is subject to Phosphothreonine. A phosphoserine mark is found at Ser-1683, Ser-1685, Ser-1687, Ser-1688, Ser-1718, and Ser-1720. 2 stretches are compositionally biased toward basic residues: residues 1725-1745 (GLQR…RRRD) and 1754-1772 (SRRR…RRRG). Residues Ser-1774, Ser-1778, Ser-1810, Ser-1813, Ser-1832, and Ser-1834 each carry the phosphoserine modification. Low complexity predominate over residues 1776–1789 (YHSRSPTRQESSRT). Positions 1790-1810 (SSRRRRGRSRTPLTSRKRSRS) are enriched in basic residues. Positions 1818–2020 (KRSRSRASPA…PRAARGKRSL (203 aa)) are enriched in basic residues. A Phosphothreonine modification is found at Thr-1836. Residues Ser-1840 and Ser-1846 each carry the phosphoserine modification. At Thr-1848 the chain carries Phosphothreonine. Phosphoserine occurs at positions 1849, 1869, 1872, 1876, and 1878. 2 positions are modified to phosphothreonine: Thr-1880 and Thr-1884. A phosphoserine mark is found at Ser-1898 and Ser-1900. A phosphothreonine mark is found at Thr-1902 and Thr-1906. 2 positions are modified to phosphoserine: Ser-1910 and Ser-1912. Phosphothreonine occurs at positions 1914 and 1918. 3 positions are modified to phosphoserine: Ser-1922, Ser-1924, and Ser-1927. Thr-1930 is modified (phosphothreonine). A phosphoserine mark is found at Ser-1936, Ser-1939, Ser-1948, Ser-1951, Ser-1960, Ser-1963, Ser-1970, and Ser-1972. Position 1974 is a phosphothreonine (Thr-1974). Ser-1982 and Ser-1984 each carry phosphoserine. Residue Thr-1986 is modified to Phosphothreonine. Residues Ser-1994, Ser-1996, Ser-1998, and Ser-2019 each carry the phosphoserine modification. Position 2021 is a phosphothreonine (Thr-2021). A compositionally biased stretch (low complexity) spans 2022-2047 (RSPPAIRRRSASGSSSDRSRSATPPA). A phosphoserine mark is found at Ser-2023 and Ser-2042. At Thr-2044 the chain carries Phosphothreonine. Phosphoserine occurs at positions 2052 and 2054. Thr-2056 is modified (phosphothreonine). Low complexity predominate over residues 2062–2076 (SSSRMSCFSRPSMSP). Residues Ser-2070, Ser-2073, Ser-2075, and Ser-2084 each carry the phosphoserine modification. Phosphothreonine is present on Thr-2096. Omega-N-methylarginine occurs at positions 2146, 2159, 2183, and 2198. Residue Ser-2224 is modified to Phosphoserine. Omega-N-methylarginine occurs at positions 2226 and 2240. Thr-2241 and Thr-2254 each carry phosphothreonine. Ser-2262 is modified (phosphoserine). The interval 2263 to 2703 (LTGSGTPPTA…SNRHRSSRSP (441 aa)) is disordered. A phosphothreonine mark is found at Thr-2268 and Thr-2281. The span at 2269 to 2283 (PPTAANYPSSSRTPQ) shows a compositional bias: polar residues. Arg-2295 carries the post-translational modification Omega-N-methylarginine. 3 positions are modified to phosphoserine: Ser-2296, Ser-2321, and Ser-2329. Thr-2334 is modified (phosphothreonine). Ser-2335 carries the phosphoserine modification. Asymmetric dimethylarginine; alternate is present on Arg-2337. Arg-2337 carries the omega-N-methylarginine; alternate modification. Phosphoserine is present on residues Ser-2347, Ser-2351, and Ser-2360. At Thr-2362 the chain carries Phosphothreonine. Phosphoserine occurs at positions 2365, 2368, 2381, 2384, 2404, and 2408. 2 stretches are compositionally biased toward polar residues: residues 2410–2443 (FSDQ…SASD) and 2467–2476 (TGAQQPSTLA). Positions 2487–2521 (SSSSSSSSSSSSSSSSSSSSSSSSGSSSSDSEGSS) are enriched in low complexity. Ser-2535 is modified (phosphoserine). Thr-2537 carries the phosphothreonine modification. Lys-2541 is covalently cross-linked (Glycyl lysine isopeptide (Lys-Gly) (interchain with G-Cter in SUMO2)). Thr-2553 carries the post-translational modification Phosphothreonine. Over residues 2562–2602 (SSSSSSSSSSSSSSSSSSSSSSSSSSSSSSSSSSSSSSSSS) the composition is skewed to low complexity. A compositionally biased stretch (pro residues) spans 2605–2622 (PAKPGPQALPKPASPKKP). Ser-2618, Ser-2629, Ser-2631, Ser-2638, Ser-2642, Ser-2644, Ser-2646, Ser-2648, Ser-2656, and Ser-2660 each carry phosphoserine. Positions 2623-2643 (PPGERRSRSPRKPIDSLRDSR) are enriched in basic and acidic residues. Position 2689 is a phosphothreonine (Thr-2689). The residue at position 2691 (Ser-2691) is a Phosphoserine. The span at 2694–2703 (SNRHRSSRSP) shows a compositional bias: basic residues.

The protein belongs to the CWC21 family. As to quaternary structure, component of pre-catalytic, catalytic and post-catalytic spliceosome complexes. Found in a pre-mRNA splicing complex with SFRS4, SFRS5, SNRP70, SNRPA1, SRRM1 and SRRM2. Component of the minor spliceosome, which splices U12-type introns. Interacts with DHX8. Interacts with CACTIN.

Its subcellular location is the nucleus. It localises to the nucleus speckle. In terms of biological role, required for pre-mRNA splicing as component of the spliceosome. As a component of the minor spliceosome, involved in the splicing of U12-type introns in pre-mRNAs. This is Serine/arginine repetitive matrix protein 2 (Srrm2) from Mus musculus (Mouse).